The chain runs to 67 residues: Protein SlyX homolog (67 aa).

It belongs to the SlyX family.

This Mesorhizobium japonicum (strain LMG 29417 / CECT 9101 / MAFF 303099) (Mesorhizobium loti (strain MAFF 303099)) protein is Protein SlyX homolog.